The primary structure comprises 259 residues: UPF0246 protein PFL_1025 (259 aa).

It belongs to the UPF0246 family.

This Pseudomonas fluorescens (strain ATCC BAA-477 / NRRL B-23932 / Pf-5) protein is UPF0246 protein PFL_1025.